The primary structure comprises 380 residues: Flap endonuclease 1 (380 aa).

Positions 1–104 (MGIQGLAKLI…GELAKRSERR (104 aa)) are N-domain. Arginine 19 carries the post-translational modification Symmetric dimethylarginine; by PRMT5. Residue aspartate 34 coordinates Mg(2+). 2 residues coordinate DNA: arginine 47 and arginine 70. Residue lysine 80 is modified to N6-acetyllysine. Aspartate 86 provides a ligand contact to Mg(2+). Arginine 100 and arginine 104 each carry symmetric dimethylarginine; by PRMT5. The I-domain stretch occupies residues 122–253 (EVEKFTKRLV…KRAVDLIQKH (132 aa)). Residues glutamate 158, glutamate 160, aspartate 179, and aspartate 181 each contribute to the Mg(2+) site. Glutamate 158 contacts DNA. A Phosphoserine; by CDK2 modification is found at serine 187. Arginine 192 is modified (symmetric dimethylarginine; by PRMT5). A Phosphoserine modification is found at serine 197. DNA contacts are provided by glycine 231 and aspartate 233. Residue aspartate 233 participates in Mg(2+) binding. 3 positions are modified to phosphoserine: serine 255, serine 293, and serine 335. The tract at residues 327-380 (RLSKSRQGSTQGRLDDFFKVTGSLSSAKRKEPEPKGSTKKKAKTGAAGKFKRGK) is disordered. The residue at position 336 (threonine 336) is a Phosphothreonine. The interaction with PCNA stretch occupies residues 336-344 (TQGRLDDFF). Position 354 is an N6-acetyllysine (lysine 354). Residues 363–380 (STKKKAKTGAAGKFKRGK) are compositionally biased toward basic residues. Threonine 364 carries the phosphothreonine modification. N6-acetyllysine is present on residues lysine 375, lysine 377, and lysine 380.

Belongs to the XPG/RAD2 endonuclease family. FEN1 subfamily. Interacts with PCNA. Three molecules of FEN1 bind to one PCNA trimer with each molecule binding to one PCNA monomer. PCNA stimulates the nuclease activity without altering cleavage specificity. The C-terminal domain binds EP300; can bind simultaneously to both PCNA and EP300. Interacts with DDX11; this interaction is direct and increases flap endonuclease activity of FEN1. Interacts with WDR4; regulating its endonuclease activity. Interacts with POLB. Requires Mg(2+) as cofactor. Acetylated by EP300. Acetylation inhibits both endonuclease and exonuclease activity. Acetylation also reduces DNA-binding activity but does not affect interaction with PCNA or EP300. Post-translationally, phosphorylation upon DNA damage induces relocalization to the nuclear plasma. Phosphorylation at Ser-187 by CDK2 occurs during late S-phase and results in dissociation from PCNA. In terms of processing, methylation at Arg-192 by PRMT5 impedes Ser-187 phosphorylation and increases interaction with PCNA.

It localises to the nucleus. The protein localises to the nucleolus. It is found in the nucleoplasm. The protein resides in the mitochondrion. Its function is as follows. Structure-specific nuclease with 5'-flap endonuclease and 5'-3' exonuclease activities involved in DNA replication and repair. During DNA replication, cleaves the 5'-overhanging flap structure that is generated by displacement synthesis when DNA polymerase encounters the 5'-end of a downstream Okazaki fragment. It enters the flap from the 5'-end and then tracks to cleave the flap base, leaving a nick for ligation. Also involved in the long patch base excision repair (LP-BER) pathway, by cleaving within the apurinic/apyrimidinic (AP) site-terminated flap. Acts as a genome stabilization factor that prevents flaps from equilibrating into structures that lead to duplications and deletions. Also possesses 5'-3' exonuclease activity on nicked or gapped double-stranded DNA, and exhibits RNase H activity. Also involved in replication and repair of rDNA and in repairing mitochondrial DNA. The protein is Flap endonuclease 1 of Homo sapiens (Human).